We begin with the raw amino-acid sequence, 208 residues long: Methylthioribulose-1-phosphate dehydratase (208 aa).

Residues His-98 and His-100 each contribute to the Zn(2+) site.

It belongs to the aldolase class II family. MtnB subfamily. It depends on Zn(2+) as a cofactor.

It catalyses the reaction 5-(methylsulfanyl)-D-ribulose 1-phosphate = 5-methylsulfanyl-2,3-dioxopentyl phosphate + H2O. The protein operates within amino-acid biosynthesis; L-methionine biosynthesis via salvage pathway; L-methionine from S-methyl-5-thio-alpha-D-ribose 1-phosphate: step 2/6. Functionally, catalyzes the dehydration of methylthioribulose-1-phosphate (MTRu-1-P) into 2,3-diketo-5-methylthiopentyl-1-phosphate (DK-MTP-1-P). The sequence is that of Methylthioribulose-1-phosphate dehydratase from Hahella chejuensis (strain KCTC 2396).